Consider the following 70-residue polypeptide: UPF0337 protein YjbJ (70 aa).

This sequence belongs to the UPF0337 (CsbD) family.

The sequence is that of UPF0337 protein YjbJ (yjbJ) from Salmonella typhi.